Here is a 236-residue protein sequence, read N- to C-terminus: Sugar fermentation stimulation protein homolog (236 aa).

This sequence belongs to the SfsA family.

The polypeptide is Sugar fermentation stimulation protein homolog (Gloeobacter violaceus (strain ATCC 29082 / PCC 7421)).